Here is a 539-residue protein sequence, read N- to C-terminus: Copine-C (539 aa).

2 C2 domains span residues 1 to 120 (MIPS…KIVA) and 128 to 251 (VTGK…PLIN). 6 residues coordinate Ca(2+): Leu23, Asp24, Asp30, Asp83, Asp85, and Asp98. The 218-residue stretch at 290–507 (SLMTAIDCTG…ALAQETLKEI (218 aa)) folds into the VWFA domain.

This sequence belongs to the copine family. Ca(2+) is required as a cofactor.

In Dictyostelium discoideum (Social amoeba), this protein is Copine-C (cpnC).